The chain runs to 641 residues: MTDAKYVLCRWKKRLWPAKVLAGTEKSAKNKRKKGYFLNVQILSLDKKIKVKSAEAKVLRKVHIEDIASSLASQDGTPAAPLEELTYRRSLRVALDVLNERQGSSSREGTTPRPPRVKPMEPASWPPKPSLSPSFLEDTAGSPGPTRRERMSQRLSGLPAGEEDLEYGVDHKEGLKRSGGLDAPAMCSASGGAQDREASRKQQADWMTPLGKQGRNPAQGPHSGQRVAPSSEGAGQEDGETGAGPAALCSPPGGRDLSPLDGCPAEHLGLDSGQRPRAHMSPHSPAQLGPAEEAADTRPLEEARPLSEEFMEPSAVNSLLEEDEDDEEPPRILLYHEPRSFEVGMLVWHKYQKYPFWPAVVKSVRRRDKKASVLFIEGNMNPRGRGISVLLRRLKHFDCKEKQALLDEAKEDFAQAIGWCVSLITDYRVRLGCGSFAGSFLEYYAADISSPVRKSIQQDVQGTRFPQLSGGDPEEPVAGSPQGRRPAYRKVLPDRSRAARDRANQKLVEYIVKARGAESHLRAILRNRKPSRWLKTFLSSGQYMTCVETYLEDEEQLDLVVKYLQGVYKQAGCQLLARGHGDGIRFILDVLLPEAIICAISAVDAVDYKTAEEKYIRGPALSSREKEIFDNQLLEERNRRC.

The tract at residues 98 to 329 (LNERQGSSSR…LEEDEDDEEP (232 aa)) is disordered. Ser-156 bears the Phosphoserine mark. Composition is skewed to basic and acidic residues over residues 194–203 (QDREASRKQQ) and 295–307 (ADTR…RPLS). Ser-307 carries the post-translational modification Phosphoserine. A PWWP domain is found at 343–404 (VGMLVWHKYQ…KHFDCKEKQA (62 aa)). The disordered stretch occupies residues 463-486 (TRFPQLSGGDPEEPVAGSPQGRRP).

This sequence belongs to the PWWP3A family. In terms of assembly, interacts with TP53BP1 (via BRCT domain); the interaction is not dependent on its phosphorylation status. Binds nucleosomes. Interacts with trimethylated 'Lys-36' of histone H3 (H3K36me3) (in vitro).

The protein resides in the nucleus. Involved in the DNA damage response pathway by contributing to the maintenance of chromatin architecture. Recruited to the vicinity of DNA breaks by TP53BP1 and plays an accessory role to facilitate damage-induced chromatin changes and promoting chromatin relaxation. Required for efficient DNA repair and cell survival following DNA damage. This Bos taurus (Bovine) protein is PWWP domain-containing DNA repair factor 3A (PWWP3A).